Reading from the N-terminus, the 542-residue chain is DM7 family protein CG15333 (542 aa).

Belongs to the DM7 family.

This Drosophila melanogaster (Fruit fly) protein is DM7 family protein CG15333.